The following is a 153-amino-acid chain: Large ribosomal subunit protein bL9 (153 aa).

This sequence belongs to the bacterial ribosomal protein bL9 family.

In terms of biological role, binds to the 23S rRNA. This Koribacter versatilis (strain Ellin345) protein is Large ribosomal subunit protein bL9.